We begin with the raw amino-acid sequence, 406 residues long: Probable G-protein coupled receptor tkr-1 (406 aa).

Residues 1-47 (MNQEFLIQLGERACKNAENLTLPAELEGIFFCAPSSRESLATQVFVA) are Extracellular-facing. A helical transmembrane segment spans residues 48-68 (IAFVLLMATAIIGNSVVMWII). Residues 69-76 (YQHKVMHY) are Cytoplasmic-facing. Residues 77–97 (GFNYFLFNMAFADLLIALFNV) form a helical membrane-spanning segment. Topologically, residues 98-115 (GTSWTYNLYYDWWYGDLC) are extracellular. The chain crosses the membrane as a helical span at residues 116–136 (TLTSFFGIAPTTVSVCSMMAL). The Cytoplasmic segment spans residues 137–158 (SWDRCQAVVNPLQKRPLSRKRS). The chain crosses the membrane as a helical span at residues 159–179 (VIAILIIWVVSTVTALPFAIA). At 180-204 (ASVNSLYTYDVVTSTVSKAHVCSAP) the chain is on the extracellular side. A helical transmembrane segment spans residues 205-225 (VNTFFEKVLFGIQYALPIIIL). Residues 226 to 261 (GSTFTRIAVAFRATNEATDSSLKNNHTRAKSKAVKM) lie on the Cytoplasmic side of the membrane. The helical transmembrane segment at 262-282 (LFLMVVAFVVCWLPYHIYHAF) threads the bilayer. The Extracellular segment spans residues 283–297 (ALEEFFDAARGKYAY). The helical transmembrane segment at 298–318 (LLIYWIAMSSCAYNPIIYCFA) threads the bilayer. The Cytoplasmic segment spans residues 319 to 406 (NERFRIGFRY…KVHLLSCHER (88 aa)).

This sequence belongs to the G-protein coupled receptor 1 family.

The protein resides in the cell membrane. Not known. Putative receptor. The polypeptide is Probable G-protein coupled receptor tkr-1 (tkr-1) (Caenorhabditis elegans).